The sequence spans 89 residues: Small ribosomal subunit protein uS19 (89 aa).

Belongs to the universal ribosomal protein uS19 family.

Its function is as follows. Protein S19 forms a complex with S13 that binds strongly to the 16S ribosomal RNA. The protein is Small ribosomal subunit protein uS19 of Brachyspira hyodysenteriae (strain ATCC 49526 / WA1).